The following is a 225-amino-acid chain: Phosphoserine phosphatase (225 aa).

At M1 the chain carries N-acetylmethionine. D20 (nucleophile) is an active-site residue. Positions 20 and 22 each coordinate Mg(2+). 20–22 (DVD) contacts L-serine. D22 (proton donor) is an active-site residue. O-phospho-L-serine is bound at residue M52. G53 lines the phosphate pocket. L-serine contacts are provided by residues 109-111 (SGG) and K158. Residues 109 to 111 (SGG) and K158 each bind O-phospho-L-serine. D179 lines the Mg(2+) pocket. T182 is a binding site for O-phospho-L-serine. T182 is a phosphate binding site.

The protein belongs to the HAD-like hydrolase superfamily. SerB family. As to quaternary structure, homodimer. Mg(2+) serves as cofactor.

The protein localises to the cytoplasm. Its subcellular location is the cytosol. It catalyses the reaction O-phospho-L-serine + H2O = L-serine + phosphate. The enzyme catalyses O-phospho-D-serine + H2O = D-serine + phosphate. It functions in the pathway amino-acid biosynthesis; L-serine biosynthesis; L-serine from 3-phospho-D-glycerate: step 3/3. Its function is as follows. Catalyzes the last irreversible step in the biosynthesis of L-serine from carbohydrates, the dephosphorylation of O-phospho-L-serine to L-serine. L-serine can then be used in protein synthesis, to produce other amino acids, in nucleotide metabolism or in glutathione synthesis, or can be racemized to D-serine, a neuromodulator. May also act on O-phospho-D-serine. The polypeptide is Phosphoserine phosphatase (Rattus norvegicus (Rat)).